The following is a 2155-amino-acid chain: Alpha-tectorin (2155 aa).

A signal peptide spans 1–22 (MNYSSFLRIWVSFIFALVQHQA). Residues asparagine 34, asparagine 187, asparagine 215, asparagine 278, asparagine 455, asparagine 506, asparagine 528, and asparagine 560 are each glycosylated (N-linked (GlcNAc...) asparagine). Residues 98–252 (PFWADVHNGI…GRWAFKVDGK (155 aa)) enclose the NIDO domain. The region spanning 260–314 (CTSRGQFLRRGEVFWDDLNCTVKCRCLDFNNEIYCQEASCSPYEVCEPKGKFFYC) is the VWFC domain. The 181-residue stretch at 320-500 (STCVVFGEPH…RVYHADWKCD (181 aa)) folds into the VWFD 1 domain. Cystine bridges form between cysteine 322–cysteine 461 and cysteine 344–cysteine 499. The 54-residue stretch at 597-650 (CPSFSHYSVCTSSCPDTCSDLTASRNCATPCTEGCECNQGFVLSTSQCVPLHKC) folds into the TIL 1 domain. 9 N-linked (GlcNAc...) asparagine glycosylation sites follow: asparagine 670, asparagine 687, asparagine 813, asparagine 843, asparagine 855, asparagine 898, asparagine 920, asparagine 931, and asparagine 949. A VWFD 2 domain is found at 711-886 (TVCLLSQNQV…SWTTFEEICN (176 aa)). Cysteines 713 and 849 form a disulfide. The TIL 2 domain occupies 984 to 1036 (CPENSHFEECITCTETCETLTLGPICVDSCSEGCQCDEGYALLGSQCVTRSEC). Asparagine 1048, asparagine 1235, and asparagine 1364 each carry an N-linked (GlcNAc...) asparagine glycan. Residues 1098-1278 (ASCIVSGYGH…SWVKRDTFCQ (181 aa)) enclose the VWFD 3 domain. 2 disulfide bridges follow: cysteine 1100/cysteine 1241 and cysteine 1122/cysteine 1277. The TIL 3 domain maps to 1372-1425 (CPPNSHYESCVSVCQPRCAAIRLKSDCSHYCVEGCHCDAGYVLNGKSCILPHSC). The region spanning 1485 to 1666 (SYCLAAGGGV…QKRPLAPSCN (182 aa)) is the VWFD 4 domain. Cystine bridges form between cysteine 1487–cysteine 1622, cysteine 1509–cysteine 1665, cysteine 1717–cysteine 1775, cysteine 1741–cysteine 1784, cysteine 1786–cysteine 1818, cysteine 1806–cysteine 1898, and cysteine 1837–cysteine 1857. 10 N-linked (GlcNAc...) asparagine glycosylation sites follow: asparagine 1538, asparagine 1565, asparagine 1756, asparagine 1772, asparagine 1794, asparagine 1851, asparagine 1864, asparagine 1880, asparagine 1920, and asparagine 1939. In terms of domain architecture, ZP spans 1805–2059 (TCKAAQMEVS…YSCKITCPHN (255 aa)). Intrachain disulfides connect cysteine 1980/cysteine 2040, cysteine 2001/cysteine 2056, and cysteine 2045/cysteine 2052. Asparagine 2091 is lipidated: GPI-anchor amidated asparagine. Positions 2092–2155 (GGCEQICTSR…HFVYKSGTTS (64 aa)) are cleaved as a propeptide — removed in mature form.

As to quaternary structure, may form homomeric filament after self-association or heteromeric filament after association with beta-tectorin. Interacts with CEACAM16. Post-translationally, the presence of a hydrophobic C-terminus preceded by a potential cleavage site strongly suggests that tectorins are synthesized as glycosylphosphatidylinositol-linked, membrane-bound precursors. Tectorins are targeted to the apical surface of the inner ear epithelia by the lipid and proteolytically released into the extracellular compartment.

Its subcellular location is the cell membrane. The protein resides in the secreted. The protein localises to the extracellular space. It localises to the extracellular matrix. One of the major non-collagenous components of the tectorial membrane. The tectorial membrane is an extracellular matrix of the inner ear that covers the neuroepithelium of the cochlea and contacts the stereocilia bundles of specialized sensory hair cells. Sound induces movement of these hair cells relative to the tectorial membrane, deflects the stereocilia and leads to fluctuations in hair-cell membrane potential, transducing sound into electrical signals. The chain is Alpha-tectorin (TECTA) from Homo sapiens (Human).